Consider the following 529-residue polypeptide: Tyrosinase (529 aa).

Positions 1-18 are cleaved as a signal peptide; sequence MLLAVLYCLLWSFQTSAG. The Lumenal, melanosome segment spans residues 19–476; the sequence is HFPRACVSSK…YLEQASRIWS (458 aa). Residues Asn86, Asn111, and Asn161 are each glycosylated (N-linked (GlcNAc...) asparagine). His180, His202, and His211 together coordinate Cu cation. Asn230 carries N-linked (GlcNAc...) asparagine glycosylation. A disordered region spans residues 287-313; the sequence is SLCNGTPEGPLRRNPGNHDKSRTPRLP. The N-linked (GlcNAc...) asparagine glycan is linked to Asn337. The Cu cation site is built by His363 and His367. N-linked (GlcNAc...) asparagine glycosylation occurs at Asn371. His390 contributes to the Cu cation binding site. Residues 477–497 form a helical membrane-spanning segment; the sequence is WLLGAAMVGAVLTALLAGLVS. Residues 498–529 are Cytoplasmic-facing; that stretch reads LLCRHKRKQLPEEKQPLLMEKEDYHSLYQSHL.

The protein belongs to the tyrosinase family. As to quaternary structure, forms an OPN3-dependent complex with DCT in response to blue light in melanocytes. Cu(2+) is required as a cofactor. In terms of processing, glycosylated.

Its subcellular location is the melanosome membrane. The protein localises to the melanosome. It carries out the reaction 2 L-dopa + O2 = 2 L-dopaquinone + 2 H2O. The enzyme catalyses L-tyrosine + O2 = L-dopaquinone + H2O. It catalyses the reaction 2 5,6-dihydroxyindole-2-carboxylate + O2 = 2 indole-5,6-quinone-2-carboxylate + 2 H2O. Functionally, this is a copper-containing oxidase that functions in the formation of pigments such as melanins and other polyphenolic compounds. Catalyzes the initial and rate limiting step in the cascade of reactions leading to melanin production from tyrosine. In addition to hydroxylating tyrosine to DOPA (3,4-dihydroxyphenylalanine), also catalyzes the oxidation of DOPA to DOPA-quinone, and possibly the oxidation of DHI (5,6-dihydroxyindole) to indole-5,6 quinone. This chain is Tyrosinase, found in Homo sapiens (Human).